A 345-amino-acid chain; its full sequence is UDP-N-acetylenolpyruvoylglucosamine reductase (345 aa).

The 171-residue stretch at 16–186 folds into the FAD-binding PCMH-type domain; sequence LSVSASCIKV…TAVGIFLKKE (171 aa). Residue Arg162 is part of the active site. The Proton donor role is filled by Ser232. The active site involves Glu328.

It belongs to the MurB family. The cofactor is FAD.

It is found in the cytoplasm. It carries out the reaction UDP-N-acetyl-alpha-D-muramate + NADP(+) = UDP-N-acetyl-3-O-(1-carboxyvinyl)-alpha-D-glucosamine + NADPH + H(+). It participates in cell wall biogenesis; peptidoglycan biosynthesis. Functionally, cell wall formation. The sequence is that of UDP-N-acetylenolpyruvoylglucosamine reductase from Pectobacterium atrosepticum (strain SCRI 1043 / ATCC BAA-672) (Erwinia carotovora subsp. atroseptica).